A 620-amino-acid polypeptide reads, in one-letter code: Extensin (620 aa).

An N-terminal signal peptide occupies residues 1-20; that stretch reads MKLSTLFALVLLLQSTAILS. A compositionally biased stretch (pro residues) spans 34 to 45; it reads LPPPVTSQPPPS. A disordered region spans residues 34–620; sequence LPPPVTSQPP…PPYGLLLSTP (587 aa). An H-A-P-P repeat occupies 70–73; it reads HAPP. The segment covering 106-129 has biased composition (pro residues); that stretch reads NPPPSPVISPSHPPPSYGAPPPSH. A compositionally biased stretch (low complexity) spans 145 to 163; sequence SHGHAPPSGGHTPPRGQHP. The H-A-P-P repeat unit spans residues 148-151; the sequence is HAPP. The segment covering 164–177 has biased composition (basic residues); it reads PSHRRPSPPSRHGH. Residues 178 to 219 show a composition bias toward pro residues; the sequence is PPPPTYAQPPPTPIYSPSPQVQPPPTYSPPPPTHVQPTPSPP. Positions 205–620 are contains the Ser-Pro(4) repeats; it reads SPPPPTHVQP…PPYGLLLSTP (416 aa). Repeat copies occupy residues 229–235 and 236–242. The segment covering 229 to 241 has biased composition (basic residues); that stretch reads THRHAPPTHRHAP. Positions 229-242 are 2 X 7 AA tandem repeats of T-H-R-H-A-P-P; sequence THRHAPPTHRHAPP. 2 stretches are compositionally biased toward pro residues: residues 251–552 and 562–613; these read HLPP…PPHW and GQPP…PPPY. Positions 499–600 are 3 X approximate tandem repeats; it reads PPTFSPPPPR…PTPTYGQPPS (102 aa).

In terms of processing, hydroxylated on proline residues in the S-P-P-P-P repeat. O-glycosylated on hydroxyprolines. As to expression, expressed in the tip of the emerging lateral roots.

It localises to the secreted. The protein resides in the primary cell wall. Has a specialized structural function, possibly in the mechanical penetration of the cortex and epidermis of the main root. The protein is Extensin (HRGPNT3) of Nicotiana tabacum (Common tobacco).